Reading from the N-terminus, the 186-residue chain is MDRYFFLQDATTVARLLLGNLLIRKINKKEIVARIVETEAYMGIADSACHSYGGKRTNRTNAMYSIGGYSYVYMIYGMHYMFNVVTADKNNPQAVLIRSIEPISPLLGKKSALTNGPGKLTKFLNIDLTFNKVDLIGNNELFLQRDLNLDFNIVCSKRININYAQEDDINKLWRFYIKDNKFVSRR.

The protein belongs to the DNA glycosylase MPG family.

This chain is Putative 3-methyladenine DNA glycosylase, found in Borrelia garinii subsp. bavariensis (strain ATCC BAA-2496 / DSM 23469 / PBi) (Borreliella bavariensis).